Consider the following 623-residue polypeptide: MSTEHKKQSLSAVTLAAIGVVYGDIGTSPLYTLRECFSGHYGFDVRPDVVFGFLSLIFWMLILIVSVKYLTYVMRADNAGEGGILTLMSLAGRNTSSRATSILVILGLIGGSFFYGEVVITPAISVMSAIEGLEIAAPALDPYIVPCSIAVLTLLFVIQKHGTGSVGKLFAPVMLVWFLTLALLGLRSIIANPEVLAALNPKWAISFFTEYKSVSFFALGAVVLAITGVEALYADMGHFGKFPIRLAWFTVVLPSLVLNYFGQGALLLKNPEAIKNPFFLLAPDWALIPLLILATLATVIASQAVISGVFSLTRQAVRLGYLPPMRIIHTSEMESGQIYIPVINWTLYLAVVLVIVGFERSSNLAAAYGIAVTGTMVITSVLFCTVALKNWHWNRFFVYFLLVALLVIDVPMFSANALKLFSGGWLPLSLGLVMFIIMTTWKSERFSLLRRMHEHGNSLEAMIASLEKSPPVRVPGTAVYMSRAMNVIPFALLHNLKHNKVLHDRVVLLTLRTEDAPYVHNVNRVTIEQLSPTFWRVVASYGWRETPNVEEIFHRCGLEGLPCQMMETSFFMSHESLILTKRPWYLFLRGKLFIALSRNALRAADQFEIPPNRVIELGTQVEI.

A run of 12 helical transmembrane segments spans residues 10–30 (LSAV…TSPL), 47–67 (PDVV…IVSV), 102–122 (ILVI…VITP), 138–158 (PALD…LFVI), 166–186 (VGKL…LLGL), 214–234 (VSFF…ALYA), 248–268 (WFTV…ALLL), 277–297 (PFFL…ATLA), 338–358 (IYIP…IVGF), 364–384 (LAAA…VLFC), 396–416 (FFVY…FSAN), and 420–440 (LFSG…IMTT).

It belongs to the HAK/KUP transporter (TC 2.A.72) family.

It localises to the cell inner membrane. The catalysed reaction is K(+)(in) + H(+)(in) = K(+)(out) + H(+)(out). In terms of biological role, responsible for the low-affinity transport of potassium into the cell. Likely operates as a K(+):H(+) symporter. This is Low affinity potassium transport system protein Kup from Yersinia enterocolitica serotype O:8 / biotype 1B (strain NCTC 13174 / 8081).